The primary structure comprises 33 residues: Photosystem II reaction center protein Psb30 (33 aa).

The helical transmembrane segment at 8–28 threads the bilayer; it reads QLGSLLLITVAGPLIVFFLFI.

The protein belongs to the Psb30/Ycf12 family. PSII is composed of 1 copy each of membrane proteins PsbA, PsbB, PsbC, PsbD, PsbE, PsbF, PsbH, PsbI, PsbJ, PsbK, PsbL, PsbM, PsbT, PsbY, PsbZ, Psb30/Ycf12, peripheral proteins of the oxygen-evolving complex and a large number of cofactors. It forms dimeric complexes.

The protein localises to the plastid. It localises to the chloroplast thylakoid membrane. Functionally, a core subunit of photosystem II (PSII), probably helps stabilize the reaction center. The sequence is that of Photosystem II reaction center protein Psb30 from Euglena anabaena (Euglenaria anabaena).